Reading from the N-terminus, the 862-residue chain is MLRNSTFKNMQRRHTTLREKGRRQAIRGPAYMFNEKGTSLTPEEERFLDSAEYGNIPVVRKMLEESKTLNFNCVDYMGQNALQLAVGNEHLEVTELLLKKENLARVGDALLLAISKGYVRIVEAILNHPAFAQGQRLTLSPLEQELRDDDFYAYDEDGTRFSHDITPIILAAHCQEYEIVHILLLKGARIERPHDYFCKCNECTEKQRKDSFSHSRSRMNAYKGLASAAYLSLSSEDPVLTALELSNELARLANIETEFKNDYRKLSMQCKDFVVGVLDLCRDTEEVEAILNGDVNFQVWSDHHRPSLSRIKLAIKYEVKKFVAHPNCQQQLLTMWYENLSGLRQQSIAVKFLAVFGVSIGLPFLAIAYWIAPCSKLGRTLRSPFMKFVAHAVSFTIFLGLLVVNASDRFEGVKTLPNETFTDYPKQIFRVKTTQFSWTEMLIMKWVLGMIWSECKEIWEEGPREYVLHLWNLLDFGMLSIFVASFTARFMAFLKATEAQLYVDQHVQDDTLHNVSLPPEVAYFTYARDKWWPSDPQIISEGLYAIAVVLSFSRIAYILPANESFGPLQISLGRTVKDIFKFMVIFIMVFVAFMIGMFNLYSYYRGAKYNPAFTTVEESFKTLFWSIFGLSEVISVVLKYDHKFIENIGYVLYGVYNVTMVVVLLNMLIAMINNSYQEIEEDADVEWKFARAKLWLSYFDEGRTLPAPFNLVPSPKSFYYLIMRIKMCLIKLCKSKAKSCENDLEMGMLNSKFKKTRYQAGMRNSENLTANNTLSKPTRYQKIMKRLIKRYVLKAQVDRENDEVNEGELKEIKQDISSLRYELLEEKSQATGELADLIQQLSEKFGKNLNKDHLRVNKGKDI.

Residues 1–21 (MLRNSTFKNMQRRHTTLREKG) form a disordered region. Over 1 to 351 (MLRNSTFKNM…GLRQQSIAVK (351 aa)) the chain is Cytoplasmic. Over residues 10–21 (MQRRHTTLREKG) the composition is skewed to basic residues. T15 bears the Phosphothreonine; by PKG/PRKG1 mark. 4 ANK repeats span residues 42–71 (PEEE…TLNF), 77–106 (MGQN…LARV), 108–134 (DALL…FAQG), and 163–192 (HDIT…RIER). A helical transmembrane segment spans residues 352–372 (FLAVFGVSIGLPFLAIAYWIA). Over 373–383 (PCSKLGRTLRS) the chain is Extracellular. A helical transmembrane segment spans residues 384–404 (PFMKFVAHAVSFTIFLGLLVV). Topologically, residues 405–465 (NASDRFEGVK…KEIWEEGPRE (61 aa)) are cytoplasmic. A helical membrane pass occupies residues 466-486 (YVLHLWNLLDFGMLSIFVASF). Over 487 to 537 (TARFMAFLKATEAQLYVDQHVQDDTLHNVSLPPEVAYFTYARDKWWPSDPQ) the chain is Extracellular. N514 carries an N-linked (GlcNAc...) asparagine glycan. The chain crosses the membrane as a helical span at residues 538–558 (IISEGLYAIAVVLSFSRIAYI). Over 559 to 581 (LPANESFGPLQISLGRTVKDIFK) the chain is Cytoplasmic. The helical transmembrane segment at 582-602 (FMVIFIMVFVAFMIGMFNLYS) threads the bilayer. At 603–651 (YYRGAKYNPAFTTVEESFKTLFWSIFGLSEVISVVLKYDHKFIENIGYV) the chain is on the extracellular side. A helical membrane pass occupies residues 652–672 (LYGVYNVTMVVVLLNMLIAMI). The Cytoplasmic segment spans residues 673-862 (NNSYQEIEED…HLRVNKGKDI (190 aa)).

It belongs to the transient receptor (TC 1.A.4) family. STrpC subfamily. TRPC7 sub-subfamily. Interacts with MX1 and RNF24. Interacts (via ANK-repeat domains) with PRKG1. Phosphorylation by PRKG1 at Thr-15 negatively regulates TRPC7 activity.

It localises to the cell membrane. The protein localises to the nucleus envelope. The catalysed reaction is Ca(2+)(in) = Ca(2+)(out). Forms a receptor-activated non-selective calcium permeant cation channel. Probably is operated by a phosphatidylinositol second messenger system activated by receptor tyrosine kinases or G-protein coupled receptors. Activated by diacylglycerol (DAG). May also be activated by intracellular calcium store depletion. This is Short transient receptor potential channel 7 (TRPC7) from Homo sapiens (Human).